The primary structure comprises 436 residues: Methylenetetrahydrofolate--tRNA-(uracil-5-)-methyltransferase TrmFO (436 aa).

9 to 14 (GAGLAG) contributes to the FAD binding site.

Belongs to the MnmG family. TrmFO subfamily. Requires FAD as cofactor.

The protein localises to the cytoplasm. The catalysed reaction is uridine(54) in tRNA + (6R)-5,10-methylene-5,6,7,8-tetrahydrofolate + NADH + H(+) = 5-methyluridine(54) in tRNA + (6S)-5,6,7,8-tetrahydrofolate + NAD(+). It carries out the reaction uridine(54) in tRNA + (6R)-5,10-methylene-5,6,7,8-tetrahydrofolate + NADPH + H(+) = 5-methyluridine(54) in tRNA + (6S)-5,6,7,8-tetrahydrofolate + NADP(+). Functionally, catalyzes the folate-dependent formation of 5-methyl-uridine at position 54 (M-5-U54) in all tRNAs. This chain is Methylenetetrahydrofolate--tRNA-(uracil-5-)-methyltransferase TrmFO, found in Ligilactobacillus salivarius (strain UCC118) (Lactobacillus salivarius).